The following is a 166-amino-acid chain: MTDPAPATADGLTHFDTAGNAVMVDVSAKDETERVAVAGGCVEMAPATLRAIIERGLKKGDVLSVAQLAGIMGAKRTPDLIPLCHPLALTKVAVELTPDPDHDRVVITATCALRGRTGVEMEALTAVAVAGLTVYDMCKAVDKGMRLTDIRLLSKTGGKSGTWTAS.

Substrate-binding positions include 83-85 (LCH) and 121-122 (ME). Residue Asp136 is part of the active site.

It belongs to the MoaC family. In terms of assembly, homohexamer; trimer of dimers.

It catalyses the reaction (8S)-3',8-cyclo-7,8-dihydroguanosine 5'-triphosphate = cyclic pyranopterin phosphate + diphosphate. It functions in the pathway cofactor biosynthesis; molybdopterin biosynthesis. Catalyzes the conversion of (8S)-3',8-cyclo-7,8-dihydroguanosine 5'-triphosphate to cyclic pyranopterin monophosphate (cPMP). This Rhodospirillum rubrum (strain ATCC 11170 / ATH 1.1.1 / DSM 467 / LMG 4362 / NCIMB 8255 / S1) protein is Cyclic pyranopterin monophosphate synthase.